The chain runs to 144 residues: Large-conductance mechanosensitive channel (144 aa).

2 helical membrane passes run 21–41 (VGIIIGAAFGKIVSSLVANVI) and 76–96 (GIFLQNIFDFIIVAFAVFCII). Positions 105–144 (QRGGKTRRAVQTECGRDAAYRDPRSLETTKQRHGAGYNDD) are disordered. Residues 118–134 (CGRDAAYRDPRSLETTK) are compositionally biased toward basic and acidic residues.

Belongs to the MscL family. In terms of assembly, homopentamer.

The protein resides in the cell inner membrane. In terms of biological role, channel that opens in response to stretch forces in the membrane lipid bilayer. May participate in the regulation of osmotic pressure changes within the cell. The chain is Large-conductance mechanosensitive channel from Sodalis glossinidius (strain morsitans).